An 896-amino-acid polypeptide reads, in one-letter code: Desmocollin-3 (896 aa).

The N-terminal stretch at Met-1–Arg-27 is a signal peptide. Positions Ala-28 to Arg-135 are excised as a propeptide. 5 consecutive Cadherin domains span residues Arg-136–Phe-243, Thr-244–Phe-355, Arg-356–Cys-471, Thr-472–Gln-579, and Glu-580–Lys-690. At Arg-136–Lys-690 the chain is on the extracellular side. Residue Asn-166 is glycosylated (N-linked (GlcNAc...) asparagine). N-linked (GlcNAc...) asparagine glycosylation is found at Asn-392, Asn-546, and Asn-629. Residues Trp-691–Val-711 form a helical membrane-spanning segment. Residues Cys-712–Arg-896 are Cytoplasmic-facing.

As to quaternary structure, may form homodimers. Interacts with DSG1; there is evidence to suggest that the interaction promotes cell-cell adhesion of keratinocytes. Expressed throughout the basal and spinous layer of the epidermis with weak expression in the granular layer (at protein level). Also expressed in the buccal mucosa, esophagus and cervix (at protein level).

Its subcellular location is the cell membrane. The protein resides in the cell junction. The protein localises to the desmosome. It is found in the cytoplasm. Functionally, a component of desmosome cell-cell junctions which are required for positive regulation of cellular adhesion. Required for cell-cell adhesion in the epidermis, as a result required for the maintenance of the dermal cohesion and the dermal barrier function. Required for cell-cell adhesion of epithelial cell layers surrounding the telogen hair club, as a result plays an important role in telogen hair shaft anchorage. Essential for successful completion of embryo compaction and embryo development. This is Desmocollin-3 (DSC3) from Homo sapiens (Human).